The chain runs to 606 residues: Transmembrane 9 superfamily member 1 (606 aa).

Positions 1–27 (MTVLGYPRSWSCHCLPVLILLLGIGHG) are cleaved as a signal peptide. An N-linked (GlcNAc...) asparagine glycan is attached at Asn-178. 4 helical membrane passes run 237–257 (LSIINSMVLVFLLVGFVAVIL), 310–330 (VLGVGAQFLALGTGIIVMALL), 339–359 (GAINSAAILLYALTCCISGYV), and 373–393 (VWNIILTSSLFSVPFFLTWSV). N-linked (GlcNAc...) asparagine glycosylation is present at Asn-401. The next 4 helical transmembrane spans lie at 412 to 432 (ILLLLTVWLLVGFPLTVIGGI), 469 to 489 (VGGFLPFSAISVELYYIFATV), 499 to 519 (GILFFVFAILLSVGACISIAL), and 535 to 555 (SVLSVGSTGLFIFLYSVFYYA). N-linked (GlcNAc...) asparagine glycosylation occurs at Asn-559. A helical transmembrane segment spans residues 570-590 (FGYSLLTGYVFFLMLGTISFF).

It belongs to the nonaspanin (TM9SF) (TC 9.A.2) family.

It is found in the lysosome membrane. It localises to the cytoplasmic vesicle. The protein localises to the autophagosome membrane. In terms of biological role, plays an essential role in autophagy. The protein is Transmembrane 9 superfamily member 1 (Tm9sf1) of Mus musculus (Mouse).